The primary structure comprises 494 residues: Glutamyl-tRNA(Gln) amidotransferase subunit A (494 aa).

Residues lysine 81 and serine 156 each act as charge relay system in the active site. Serine 180 acts as the Acyl-ester intermediate in catalysis.

Belongs to the amidase family. GatA subfamily. As to quaternary structure, heterotrimer of A, B and C subunits.

The catalysed reaction is L-glutamyl-tRNA(Gln) + L-glutamine + ATP + H2O = L-glutaminyl-tRNA(Gln) + L-glutamate + ADP + phosphate + H(+). In terms of biological role, allows the formation of correctly charged Gln-tRNA(Gln) through the transamidation of misacylated Glu-tRNA(Gln) in organisms which lack glutaminyl-tRNA synthetase. The reaction takes place in the presence of glutamine and ATP through an activated gamma-phospho-Glu-tRNA(Gln). The protein is Glutamyl-tRNA(Gln) amidotransferase subunit A of Mycobacterium bovis (strain ATCC BAA-935 / AF2122/97).